A 367-amino-acid chain; its full sequence is Trans-enoyl reductase opdC (367 aa).

Residues 47 to 50 (YDAK), 199 to 202 (SPHN), Y217, 264 to 265 (LD), and 353 to 354 (IT) contribute to the NADP(+) site.

It belongs to the zinc-containing alcohol dehydrogenase family. Monomer.

The protein operates within secondary metabolite biosynthesis. Its function is as follows. Trans-enoyl reductase; part of the gene cluster that mediates the biosynthesis of oxopyrrolidines, polyketide-amino acid hybrid compounds with feature structures of tetramic acid. The polyketide chain is first assembled by the highly reducing PKS module of opdA using acetyl-CoA as the starter unit and five malonyl-CoA as the extender units. OpdC acts as a trans-acting enoyl reductase and reduces the terminal alkenyl to alkane. The 17R in oxopyrrolidine A and 15R, 17S in oxopyrrolidine B are generated by non-stereospecific catalysis of the ketoreductase (KR) domain and enoyl reductases. Then the polyketides with specific configurations are transferred to the NRPS module of opdA and linked to L-tyrosine to form an amide bond. Finally, the oxopyrrolidines are offloaded through a Dieckmann cyclization catalyzed by the terminal D domain to give a tetramic acid moiety. This Penicillium oxalicum (strain 114-2 / CGMCC 5302) (Penicillium decumbens) protein is Trans-enoyl reductase opdC.